Here is a 103-residue protein sequence, read N- to C-terminus: Small ribosomal subunit protein uS10 (103 aa).

The protein belongs to the universal ribosomal protein uS10 family. In terms of assembly, part of the 30S ribosomal subunit.

Involved in the binding of tRNA to the ribosomes. The sequence is that of Small ribosomal subunit protein uS10 from Ruthia magnifica subsp. Calyptogena magnifica.